Consider the following 346-residue polypeptide: Phosphate acyltransferase (346 aa).

Belongs to the PlsX family. In terms of assembly, homodimer. Probably interacts with PlsY.

Its subcellular location is the cytoplasm. The enzyme catalyses a fatty acyl-[ACP] + phosphate = an acyl phosphate + holo-[ACP]. It participates in lipid metabolism; phospholipid metabolism. In terms of biological role, catalyzes the reversible formation of acyl-phosphate (acyl-PO(4)) from acyl-[acyl-carrier-protein] (acyl-ACP). This enzyme utilizes acyl-ACP as fatty acyl donor, but not acyl-CoA. The chain is Phosphate acyltransferase from Brucella abortus (strain S19).